A 120-amino-acid polypeptide reads, in one-letter code: Large ribosomal subunit protein uL18 (120 aa).

Belongs to the universal ribosomal protein uL18 family. Part of the 50S ribosomal subunit. Part of the 5S rRNA/L5/L18/L25 subcomplex. Contacts the 23S rRNA and 5S rRNA. Required for catalysis of RNase M5.

In terms of biological role, this is one of the proteins that bind and probably mediate the attachment of the 5S RNA into the large ribosomal subunit, where it forms part of the central protuberance. Functionally, required for correct processing of both the 5' and 3' ends of 5S rRNA precursor, which is does in conjunction with ribonuclease M5 (RNase M5, rnmV). Possibly folds the 5S rRNA precursor into the correct conformation, thus acting as a chaperone. The protein is Large ribosomal subunit protein uL18 of Bacillus subtilis (strain 168).